Consider the following 554-residue polypeptide: Protein SINE2 (554 aa).

Residues 17–290 form an ARMADILLO-type fold region; the sequence is DKDPDSHKTA…MAAHETMRQA (274 aa). 3 disordered regions span residues 306–332, 411–442, and 465–487; these read CKPR…VYSR, NESV…KHHR, and ETSS…TTED. Residues 311 to 321 are compositionally biased toward low complexity; it reads SLSGSVKSTSS. Basic and acidic residues predominate over residues 322–332; sequence LREHDGSVYSR. Residues 419-431 show a composition bias toward basic residues; the sequence is NRSRSSRRNTKKR. A compositionally biased stretch (low complexity) spans 465–485; sequence ETSSSSSIYDTSGTTTPTNTT. A KASH domain is found at 509 to 554; it reads LDPRLGRSKGVLKLGLSVFSIAVAGFASFMWMYLQDDMMPPHLVPT. The chain crosses the membrane as a helical span at residues 522-542; the sequence is LGLSVFSIAVAGFASFMWMYL. A Required for nuclear localization motif is present at residues 551–554; the sequence is LVPT.

Interacts with SUN1 and SUN2. In terms of tissue distribution, expressed in epidermal cells, mesophyll cells, trichomes and root cells.

It localises to the nucleus membrane. Plays a role in innate immunity against the oomycete pathogen A.arabidopsidis (Hpa). The polypeptide is Protein SINE2 (Arabidopsis thaliana (Mouse-ear cress)).